A 186-amino-acid polypeptide reads, in one-letter code: MTEEKSTNKKNSLFEWVKAIIIAVVLALLIRAFLFEPYLVEGTSMDPTLHDGERLFVYKTVRYVGEFKRGDIVIIDGDEKNVHYVKRLIGLPGDTVQMKDDTLYINGKKVSEPYLSENRKEAEAVGVKLTGDFGPVKVPEGKYFVMGDNRQRSMDSRNGLGLIDKKRVAGTSQFVFFPFNEIRKTD.

The Cytoplasmic segment spans residues 1–19 (MTEEKSTNKKNSLFEWVKA). The helical transmembrane segment at 20–40 (IIIAVVLALLIRAFLFEPYLV) threads the bilayer. Topologically, residues 41-186 (EGTSMDPTLH…FPFNEIRKTD (146 aa)) are extracellular. Residues serine 44 and lysine 86 contribute to the active site.

This sequence belongs to the peptidase S26 family.

The protein localises to the cell membrane. It carries out the reaction Cleavage of hydrophobic, N-terminal signal or leader sequences from secreted and periplasmic proteins.. The sequence is that of Signal peptidase I (lepB) from Bacillus licheniformis.